The primary structure comprises 87 residues: Toxin Cll5c (87 aa).

Residues Met1–Ala19 form the signal peptide. The LCN-type CS-alpha/beta domain occupies Lys20 to Ser85. Intrachain disulfides connect Cys31–Cys84, Cys35–Cys60, Cys44–Cys65, and Cys48–Cys67. Residues Lys86–Lys87 constitute a propeptide, removed by a carboxypeptidase.

The protein belongs to the long (4 C-C) scorpion toxin superfamily. Sodium channel inhibitor family. Beta subfamily. As to expression, expressed by the venom gland.

The protein resides in the secreted. Functionally, beta toxins bind voltage-independently at site-4 of sodium channels (Nav) and shift the voltage of activation toward more negative potentials thereby affecting sodium channel activation and promoting spontaneous and repetitive firing. This chain is Toxin Cll5c, found in Centruroides limpidus (Mexican scorpion).